Here is a 446-residue protein sequence, read N- to C-terminus: N-succinylarginine dihydrolase (446 aa).

Substrate is bound by residues Ala-21 to Ser-30, Asn-112, and His-139 to Arg-140. Residue Glu-176 is part of the active site. Arg-216 contributes to the substrate binding site. His-252 is a catalytic residue. Positions 254 and 364 each coordinate substrate. Cys-370 acts as the Nucleophile in catalysis.

Belongs to the succinylarginine dihydrolase family. In terms of assembly, homodimer.

It catalyses the reaction N(2)-succinyl-L-arginine + 2 H2O + 2 H(+) = N(2)-succinyl-L-ornithine + 2 NH4(+) + CO2. Its pathway is amino-acid degradation; L-arginine degradation via AST pathway; L-glutamate and succinate from L-arginine: step 2/5. In terms of biological role, catalyzes the hydrolysis of N(2)-succinylarginine into N(2)-succinylornithine, ammonia and CO(2). The protein is N-succinylarginine dihydrolase of Marinobacter nauticus (strain ATCC 700491 / DSM 11845 / VT8) (Marinobacter aquaeolei).